The sequence spans 417 residues: Serine hydroxymethyltransferase (417 aa).

(6S)-5,6,7,8-tetrahydrofolate contacts are provided by residues Leu-121 and 125–127 (GHL). Lys-229 bears the N6-(pyridoxal phosphate)lysine mark. 355 to 357 (SPF) provides a ligand contact to (6S)-5,6,7,8-tetrahydrofolate.

The protein belongs to the SHMT family. In terms of assembly, homodimer. It depends on pyridoxal 5'-phosphate as a cofactor.

The protein resides in the cytoplasm. It carries out the reaction (6R)-5,10-methylene-5,6,7,8-tetrahydrofolate + glycine + H2O = (6S)-5,6,7,8-tetrahydrofolate + L-serine. The protein operates within one-carbon metabolism; tetrahydrofolate interconversion. It functions in the pathway amino-acid biosynthesis; glycine biosynthesis; glycine from L-serine: step 1/1. Catalyzes the reversible interconversion of serine and glycine with tetrahydrofolate (THF) serving as the one-carbon carrier. This reaction serves as the major source of one-carbon groups required for the biosynthesis of purines, thymidylate, methionine, and other important biomolecules. Also exhibits THF-independent aldolase activity toward beta-hydroxyamino acids, producing glycine and aldehydes, via a retro-aldol mechanism. This is Serine hydroxymethyltransferase from Citrobacter koseri (strain ATCC BAA-895 / CDC 4225-83 / SGSC4696).